The sequence spans 137 residues: Fatty acid-binding protein homolog 7 (137 aa).

The protein belongs to the calycin superfamily. Fatty-acid binding protein (FABP) family.

In Caenorhabditis elegans, this protein is Fatty acid-binding protein homolog 7 (lbp-7).